We begin with the raw amino-acid sequence, 510 residues long: NAD(P)H-quinone oxidoreductase subunit 2 B, chloroplastic (510 aa).

12 helical membrane passes run 24–44 (LLLF…GLIL), 59–79 (WFYF…LFRW), 99–119 (IFQF…VEYI), 124–144 (MAIT…MFLC), 149–169 (LITI…LSGY), 183–203 (YLLM…WLYG), 229–249 (ISIA…PAPF), 295–315 (WHLL…LLAI), 323–343 (MLAY…IVGD), 354–374 (YMLF…LFGL), 395–415 (ALSL…AGFF), and 418–438 (LYLF…IGLL).

It belongs to the complex I subunit 2 family. In terms of assembly, NDH is composed of at least 16 different subunits, 5 of which are encoded in the nucleus.

It localises to the plastid. It is found in the chloroplast thylakoid membrane. It carries out the reaction a plastoquinone + NADH + (n+1) H(+)(in) = a plastoquinol + NAD(+) + n H(+)(out). The enzyme catalyses a plastoquinone + NADPH + (n+1) H(+)(in) = a plastoquinol + NADP(+) + n H(+)(out). NDH shuttles electrons from NAD(P)H:plastoquinone, via FMN and iron-sulfur (Fe-S) centers, to quinones in the photosynthetic chain and possibly in a chloroplast respiratory chain. The immediate electron acceptor for the enzyme in this species is believed to be plastoquinone. Couples the redox reaction to proton translocation, and thus conserves the redox energy in a proton gradient. In Agrostis stolonifera (Creeping bentgrass), this protein is NAD(P)H-quinone oxidoreductase subunit 2 B, chloroplastic.